The chain runs to 194 residues: Imidazoleglycerol-phosphate dehydratase (194 aa).

The protein belongs to the imidazoleglycerol-phosphate dehydratase family.

The protein resides in the cytoplasm. The enzyme catalyses D-erythro-1-(imidazol-4-yl)glycerol 3-phosphate = 3-(imidazol-4-yl)-2-oxopropyl phosphate + H2O. Its pathway is amino-acid biosynthesis; L-histidine biosynthesis; L-histidine from 5-phospho-alpha-D-ribose 1-diphosphate: step 6/9. In Caldicellulosiruptor saccharolyticus (strain ATCC 43494 / DSM 8903 / Tp8T 6331), this protein is Imidazoleglycerol-phosphate dehydratase.